Reading from the N-terminus, the 544-residue chain is Secreted aspartic protease 9 (544 aa).

Positions 1–17 are cleaved as a signal peptide; it reads MRLNSVALLSLVATALA. The disordered stretch occupies residues 31-50; it reads GESKDDLSPEDDSNPRFVKR. Positions 65–479 constitute a Peptidase A1 domain; that stretch reads YMATLKIGSN…DLDDYEVSLA (415 aa). 83–85 is a binding site for pepstatin A; the sequence is DTG. A disulfide bridge links cysteine 98 with cysteine 195. Threonine 167 is an active-site residue. 3 N-linked (GlcNAc...) asparagine glycosylation sites follow: asparagine 212, asparagine 240, and asparagine 252. Aspartate 371 is a catalytic residue. A pepstatin A-binding site is contributed by 371–375; sequence DTGST. A disulfide bridge links cysteine 406 with cysteine 441. Residues asparagine 422 and asparagine 499 are each glycosylated (N-linked (GlcNAc...) asparagine). Residues 500–520 are disordered; that stretch reads SSGSGTTSSSGTSTSTSTRHS.

Belongs to the peptidase A1 family. In terms of assembly, monomer. In terms of processing, the GPI-anchor is attached to the protein in the endoplasmic reticulum and serves to target the protein to the cell surface. There, the glucosamine-inositol phospholipid moiety is cleaved off and the GPI-modified mannoprotein is covalently attached via its lipidless GPI glycan remnant to the 1,6-beta-glucan of the outer cell wall layer.

It localises to the cell membrane. The protein resides in the secreted. The protein localises to the cell wall. It carries out the reaction Preferential cleavage at the carboxyl of hydrophobic amino acids, but fails to cleave 15-Leu-|-Tyr-16, 16-Tyr-|-Leu-17 and 24-Phe-|-Phe-25 of insulin B chain. Activates trypsinogen, and degrades keratin.. In terms of biological role, secreted aspartic peptidases (SAPs) are a group of ten acidic hydrolases considered as key virulence factors. These enzymes supply the fungus with nutrient amino acids as well as are able to degrade the selected host's proteins involved in the immune defense. Moreover, acts toward human hemoglobin though limited proteolysis to generate a variety of antimicrobial hemocidins, enabling to compete with the other microorganisms of the same physiological niche using the microbicidal peptides generated from the host protein. Plays a key role in defense against host by cleaving histatin-5 (Hst 5), a peptide from human saliva that carries out fungicidal activity. The cleavage rate decreases in an order of SAP2 &gt; SAP9 &gt; SAP3 &gt; SAP7 &gt; SAP4 &gt; SAP1 &gt; SAP8. The first cleavage occurs between residues 'Lys-17' and 'His-18' of Hst 5, giving DSHAKRHHGYKRKFHEK and HHSHRGY peptides. Simultaneously, the DSHAKRHHGYKRK peptide is also formed. Further fragmentation by SAP9 results in FHEK product. The polypeptide is Secreted aspartic protease 9 (Candida albicans (Yeast)).